We begin with the raw amino-acid sequence, 221 residues long: Ras-related protein Rab-27A (221 aa).

Ser2 carries the N-acetylserine modification. Ser2 is modified (phosphoserine). GTP is bound at residue 16 to 24; it reads GDSGVGKTS. The Effector region motif lies at 38–46; the sequence is FITTVGIDF. GTP contacts are provided by residues 74–78, 133–136, and 163–165; these read DTAGQ, NKSD, and SAA. A disulfide bond links Cys123 and Cys188. 2 S-geranylgeranyl cysteine lipidation sites follow: Cys219 and Cys221. Residue Cys221 is modified to Cysteine methyl ester.

The protein belongs to the small GTPase superfamily. Rab family. In terms of assembly, binds SYTL1, SYTL2, SLAC2B, MYRIP, SYTL3, SYTL4, SYTL5 and MLPH. Interacts with UNC13D. Interacts with RPH3A and RPH3A. Does not interact with the BLOC-3 complex (heterodimer of HPS1 and HPS4). Interacts (GDP-bound form preferentially) with DENND10. As to expression, detected in melanocytes. Expressed abundantly in the stomach and is predominantly localized at the apical region of gastric-surface mucus cells. Also expressed in the thymus and lung.

The protein resides in the membrane. Its subcellular location is the melanosome. It is found in the late endosome. The protein localises to the lysosome. The catalysed reaction is GTP + H2O = GDP + phosphate + H(+). With respect to regulation, regulated by guanine nucleotide exchange factors (GEFs) which promote the exchange of bound GDP for free GTP, GTPase activating proteins (GAPs) which increase the GTP hydrolysis activity, and GDP dissociation inhibitors which inhibit the dissociation of the nucleotide from the GTPase. Activated by GEFs such as DENND10. Functionally, small GTPase which cycles between active GTP-bound and inactive GDP-bound states. In its active state, binds to a variety of effector proteins to regulate homeostasis of late endocytic pathway, including endosomal positioning, maturation and secretion. Plays a role in cytotoxic granule exocytosis in lymphocytes. Required for both granule maturation and granule docking and priming at the immunologic synapse. In Mus musculus (Mouse), this protein is Ras-related protein Rab-27A (Rab27a).